A 237-amino-acid polypeptide reads, in one-letter code: tRNA (guanine-N(1)-)-methyltransferase (237 aa).

Residues glycine 115 and 134-139 contribute to the S-adenosyl-L-methionine site; that span reads LGDFVL.

This sequence belongs to the RNA methyltransferase TrmD family. In terms of assembly, homodimer.

The protein resides in the cytoplasm. It catalyses the reaction guanosine(37) in tRNA + S-adenosyl-L-methionine = N(1)-methylguanosine(37) in tRNA + S-adenosyl-L-homocysteine + H(+). Specifically methylates guanosine-37 in various tRNAs. The chain is tRNA (guanine-N(1)-)-methyltransferase from Synechococcus sp. (strain RCC307).